We begin with the raw amino-acid sequence, 187 residues long: Elongation factor P (187 aa).

Belongs to the elongation factor P family.

The protein resides in the cytoplasm. It participates in protein biosynthesis; polypeptide chain elongation. Functionally, involved in peptide bond synthesis. Stimulates efficient translation and peptide-bond synthesis on native or reconstituted 70S ribosomes in vitro. Probably functions indirectly by altering the affinity of the ribosome for aminoacyl-tRNA, thus increasing their reactivity as acceptors for peptidyl transferase. The protein is Elongation factor P of Fusobacterium nucleatum subsp. nucleatum (strain ATCC 25586 / DSM 15643 / BCRC 10681 / CIP 101130 / JCM 8532 / KCTC 2640 / LMG 13131 / VPI 4355).